We begin with the raw amino-acid sequence, 356 residues long: Sorbitol dehydrogenase (356 aa).

Position 44 (cysteine 44) interacts with Zn(2+). Tyrosine 50 is a binding site for substrate. Positions 69 and 70 each coordinate Zn(2+). Residue glutamate 155 participates in substrate binding. Residues isoleucine 183, aspartate 203, and arginine 208 each coordinate NAD(+). A phosphoserine mark is found at serine 210 and serine 224. Residues 272–274 (VGL) and 296–298 (VFR) contribute to the NAD(+) site. Substrate is bound by residues arginine 298 and tyrosine 299.

The protein belongs to the zinc-containing alcohol dehydrogenase family. Homotetramer. Zn(2+) is required as a cofactor. As to expression, expressed in lens.

The protein localises to the mitochondrion membrane. The protein resides in the cell projection. It is found in the cilium. Its subcellular location is the flagellum. It carries out the reaction xylitol + NAD(+) = D-xylulose + NADH + H(+). It catalyses the reaction keto-D-fructose + NADH + H(+) = D-sorbitol + NAD(+). The enzyme catalyses L-iditol + NAD(+) = keto-L-sorbose + NADH + H(+). Inhibited in vitro by metal chelators such as EDTA and 1,10-phenanthroline. Functionally, polyol dehydrogenase that catalyzes the reversible NAD(+)-dependent oxidation of various sugar alcohols. Is mostly active with xylitol, D-sorbitol (D-glucitol) and L-iditol as substrates, leading to the C2-oxidized products D-xylulose, D-fructose and L-sorbose, respectively. Is a key enzyme in the polyol pathway that interconverts glucose and fructose via sorbitol, which constitutes an important alternate route for glucose metabolism. May play a role in sperm motility by using sorbitol as an alternative energy source for sperm motility. Cannot use NADP(+) as the electron acceptor. Has no activity on ethanol, methanol, glycerol, galactitol and fructose 6-phosphate. This chain is Sorbitol dehydrogenase (SORD), found in Bos taurus (Bovine).